The primary structure comprises 602 residues: Probable translation initiation factor IF-2 (602 aa).

Positions 9–229 constitute a tr-type G domain; it reads LRQPIVVVLG…GLTQNYMKNK (221 aa). Residues 18–25 are G1; it reads GHVDHGKT. 18–25 is a GTP binding site; that stretch reads GHVDHGKT. Residues 43–47 form a G2 region; the sequence is EMTQE. The G3 stretch occupies residues 82-85; it reads DTPG. Residues 82–86 and 136–139 contribute to the GTP site; these read DTPGH and NKID. Residues 136–139 form a G4 region; it reads NKID. The segment at 204–206 is G5; that stretch reads SAK.

Belongs to the TRAFAC class translation factor GTPase superfamily. Classic translation factor GTPase family. IF-2 subfamily.

Functionally, function in general translation initiation by promoting the binding of the formylmethionine-tRNA to ribosomes. Seems to function along with eIF-2. The protein is Probable translation initiation factor IF-2 (infB) of Sulfolobus acidocaldarius (strain ATCC 33909 / DSM 639 / JCM 8929 / NBRC 15157 / NCIMB 11770).